A 344-amino-acid polypeptide reads, in one-letter code: UDP-N-acetylenolpyruvoylglucosamine reductase (344 aa).

The FAD-binding PCMH-type domain occupies 19-189; it reads INVTAKKIIF…IAVGIKIKKN (171 aa). The active site involves Arg165. Ser235 acts as the Proton donor in catalysis. The active site involves Glu331.

It belongs to the MurB family. FAD is required as a cofactor.

Its subcellular location is the cytoplasm. The enzyme catalyses UDP-N-acetyl-alpha-D-muramate + NADP(+) = UDP-N-acetyl-3-O-(1-carboxyvinyl)-alpha-D-glucosamine + NADPH + H(+). Its pathway is cell wall biogenesis; peptidoglycan biosynthesis. Functionally, cell wall formation. The polypeptide is UDP-N-acetylenolpyruvoylglucosamine reductase (Buchnera aphidicola subsp. Schizaphis graminum (strain Sg)).